The chain runs to 263 residues: uncharacterized protein (263 aa).

The tract at residues 183-263 is disordered; sequence APHDRPEGVP…PPSTNTKGAA (81 aa). Polar residues-rich tracts occupy residues 230–239 and 253–263; these read SRPTAPSRPS and TPPSTNTKGAA.

Its function is as follows. Probably does not play a direct role in plasmid integration or excision. This is an uncharacterized protein from Saccharopolyspora erythraea (Streptomyces erythraeus).